A 107-amino-acid chain; its full sequence is uncharacterized protein (107 aa).

The 102-residue stretch at 6 to 107 folds into the Glutaredoxin domain; sequence KKVIEQILDN…QAQVETLLAA (102 aa). Glutathione is bound at residue K23. Position 31 (C31) interacts with [2Fe-2S] cluster. Residues R60 and 85–86 each bind glutathione; that span reads AD.

This sequence belongs to the glutaredoxin family. Monothiol subfamily.

The protein localises to the plastid. It localises to the chloroplast. This is an uncharacterized protein from Porphyra purpurea (Red seaweed).